A 257-amino-acid chain; its full sequence is MTAAVFFGCAFIAFGPALALYVFTIATEPLRIIFLIAGAFFWLVSLLISSLVWFMARVIIDNKDGPTQKYLLIFGTFVSVYIQEMFRFAYYRLLKKASEGLKSINPGETAPSMRLLAYVSGLGFGIMSGVFSFVNTLSDSLGPGTVGIHGDSPQFFLYSAFMTLVIILLHVFWGIVFFDGCEKKKWGILLIVLLTHLLVSAQTFISSYYGINLASAFIILVLMGTWAFLAAGGSCRSLKLCLLCQDKDFLLYNQRSR.

7 helical membrane passes run 5 to 25 (VFFGCAFIAFGPALALYVFTI), 32 to 52 (IIFLIAGAFFWLVSLLISSLV), 70 to 90 (YLLIFGTFVSVYIQEMFRFAY), 115 to 135 (LLAYVSGLGFGIMSGVFSFVN), 158 to 178 (YSAFMTLVIILLHVFWGIVFF), 186 to 206 (WGILLIVLLTHLLVSAQTFIS), and 213 to 233 (LASAFIILVLMGTWAFLAAGG).

This sequence belongs to the APH-1 family. In terms of assembly, probable component of the gamma-secretase complex, a complex composed of a presenilin homodimer (PSEN1 or PSEN2), nicastrin (NCSTN), APH1 (APH1A or APH1B) and PEN2. Such minimal complex is sufficient for secretase activity, although other components may exist. Interacts with PSEN1 and PSEN2.

The protein resides in the membrane. Its function is as follows. Probable subunit of the gamma-secretase complex, an endoprotease complex that catalyzes the intramembrane cleavage of integral proteins such as Notch receptors and APP (amyloid-beta precursor protein). It probably represents a stabilizing cofactor for the presenilin homodimer that promotes the formation of a stable complex. Probably present in a minority of gamma-secretase complexes compared to APH1A. The protein is Gamma-secretase subunit APH-1B (APH1B) of Pongo abelii (Sumatran orangutan).